Reading from the N-terminus, the 684-residue chain is PAN2-PAN3 deadenylation complex subunit PAN3 (684 aa).

Disordered regions lie at residues 1-38, 68-97, and 112-146; these read MLPPPKSAAVQIVRPPSPSSEKAKEKEKKHSPEKRETA, DPSTPQNSSPVAHAPTPSAPTPLAGTPARE, and VPKGLDSSPRASTPSVPTPSAPTPPVWPSLPSTGL. Basic and acidic residues predominate over residues 21–38; that stretch reads EKAKEKEKKHSPEKRETA. The segment at 36–65 adopts a C3H1-type zinc-finger fold; it reads ETAQRICRNVMIYGYCKYQDQGCIYYHPPA. Pro residues predominate over residues 127 to 139; it reads VPTPSAPTPPVWP. A pseudokinase domain region spans residues 263–544; that stretch reads GANGASAPGL…SIDEVVKMMG (282 aa). ATP-binding positions include Arg-326 and 375-382; that span reads DYHPLSTT. Positions 387-412 are disordered; the sequence is YLSPNPPEPSPASALANQPPKRRSSP. Residue 444-445 coordinates ATP; that stretch reads SK. Residues 545-583 are a coiled coil; it reads PRILNELDAVQSYADVLENELGAEVENGRIVRLLTKLGF. Residues 584 to 684 are knob domain; the sequence is INERAEFELD…NAGNNHRVHR (101 aa).

Belongs to the protein kinase superfamily. PAN3 family. In terms of assembly, homodimer. Forms a heterotrimer with a catalytic subunit PAN2 to form the poly(A)-nuclease (PAN) deadenylation complex. Interacts (via PAM-2 motif) with poly(A)-binding protein PAB1 (via PABC domain), conferring substrate specificity of the enzyme complex.

It is found in the cytoplasm. Functionally, regulatory subunit of the poly(A)-nuclease (PAN) deadenylation complex, one of two cytoplasmic mRNA deadenylases involved in mRNA turnover. PAN specifically shortens poly(A) tails of RNA and the activity is stimulated by poly(A)-binding protein PAB1. PAN deadenylation is followed by rapid degradation of the shortened mRNA tails by the CCR4-NOT complex. Deadenylated mRNAs are then degraded by two alternative mechanisms, namely exosome-mediated 3'-5' exonucleolytic degradation, or deadenylation-dependent mRNA decaping and subsequent 5'-3' exonucleolytic degradation by XRN1. May also be involved in post-transcriptional maturation of mRNA poly(A) tails. PAN3 acts as a positive regulator for PAN activity, recruiting the catalytic subunit PAN2 to mRNA via its interaction with RNA and with PAB1. This is PAN2-PAN3 deadenylation complex subunit PAN3 from Cryptococcus neoformans var. neoformans serotype D (strain B-3501A) (Filobasidiella neoformans).